The sequence spans 147 residues: Ubiquitin-conjugating enzyme E2 D1 (147 aa).

One can recognise a UBC core domain in the interval 1 to 147 (MALKRIQKEL…AREWTQKYAM (147 aa)). Cys-85 serves as the catalytic Glycyl thioester intermediate.

This sequence belongs to the ubiquitin-conjugating enzyme family. In terms of assembly, component of a E3 ubiquitin ligase complex containing UBE2D1, SIAH1, CACYBP/SIP, SKP1, APC and TBL1X. Interacts with RNF11. Autoubiquitinated.

It localises to the cytoplasm. The enzyme catalyses S-ubiquitinyl-[E1 ubiquitin-activating enzyme]-L-cysteine + [E2 ubiquitin-conjugating enzyme]-L-cysteine = [E1 ubiquitin-activating enzyme]-L-cysteine + S-ubiquitinyl-[E2 ubiquitin-conjugating enzyme]-L-cysteine.. It carries out the reaction S-ubiquitinyl-[E1 ubiquitin-activating enzyme]-L-cysteine + [acceptor protein]-L-lysine = [E1 ubiquitin-activating enzyme]-L-cysteine + N(6)-monoubiquitinyl-[acceptor protein]-L-lysine.. It functions in the pathway protein modification; protein ubiquitination. Its function is as follows. Accepts ubiquitin from the E1 complex and catalyzes its covalent attachment to other proteins. In vitro catalyzes 'Lys-48'-linked polyubiquitination. Mediates the selective degradation of short-lived and abnormal proteins. Functions in the E6/E6-AP-induced ubiquitination of p53/TP53. Mediates ubiquitination of PEX5 and auto-ubiquitination of STUB1, TRAF6 and TRIM63/MURF1. Ubiquitinates STUB1-associated HSP90AB1 in vitro. Lacks inherent specificity for any particular lysine residue of ubiquitin. Essential for viral activation of IRF3. Mediates polyubiquitination of CYP3A4. The sequence is that of Ubiquitin-conjugating enzyme E2 D1 (UBE2D1) from Bos taurus (Bovine).